We begin with the raw amino-acid sequence, 374 residues long: Speckle-type POZ protein A (374 aa).

One can recognise an MATH domain in the interval 31 to 161 (KFSYMWTINN…DDKLTLFCEV (131 aa)). A required for nuclear localization region spans residues 71 to 191 (VNPKGLDEES…PECRLADELG (121 aa)). A BTB domain is found at 173–297 (QNTMNMVKVP…MCEEALCSNL (125 aa)). Positions 297-355 (LSVENAAEILILADLHSADQLKTQAVDFINYHASDVMETSGWKSMVVSHPHLVAEAYRS) are homodimerization.

This sequence belongs to the Tdpoz family. As to quaternary structure, homodimer. Part of cullin-RING-based BCR (BTB-CUL3-RBX1) E3 ubiquitin-protein ligase complexes that contain CUL3 and SPOP, plus a target protein.

It localises to the nucleus. Its subcellular location is the nucleus speckle. It participates in protein modification; protein ubiquitination. Functionally, component of a cullin-RING-based BCR (BTB-CUL3-RBX1) E3 ubiquitin-protein ligase complex that mediates the ubiquitination of target proteins, leading most often to their proteasomal degradation. This Xenopus laevis (African clawed frog) protein is Speckle-type POZ protein A (spop-a).